The chain runs to 370 residues: tRNA-specific 2-thiouridylase MnmA (370 aa).

Residues 11-18 and methionine 37 each bind ATP; that span reads GMSGGVDS. Positions 97–99 are interaction with target base in tRNA; the sequence is NPD. Cysteine 102 functions as the Nucleophile in the catalytic mechanism. Cysteine 102 and cysteine 199 are oxidised to a cystine. Position 126 (glycine 126) interacts with ATP. The interaction with tRNA stretch occupies residues 149-151; it reads KDQ. The Cysteine persulfide intermediate role is filled by cysteine 199. Positions 307–308 are interaction with tRNA; the sequence is RY.

This sequence belongs to the MnmA/TRMU family.

Its subcellular location is the cytoplasm. The catalysed reaction is S-sulfanyl-L-cysteinyl-[protein] + uridine(34) in tRNA + AH2 + ATP = 2-thiouridine(34) in tRNA + L-cysteinyl-[protein] + A + AMP + diphosphate + H(+). Its function is as follows. Catalyzes the 2-thiolation of uridine at the wobble position (U34) of tRNA, leading to the formation of s(2)U34. This is tRNA-specific 2-thiouridylase MnmA from Staphylococcus saprophyticus subsp. saprophyticus (strain ATCC 15305 / DSM 20229 / NCIMB 8711 / NCTC 7292 / S-41).